Consider the following 690-residue polypeptide: Elongation factor G (690 aa).

Residues 8-283 enclose the tr-type G domain; it reads SKCRNIGIMA…AVVDFLPAPN (276 aa). GTP contacts are provided by residues 17–24, 81–85, and 135–138; these read AHIDAGKT, DTPGH, and NKMD.

Belongs to the TRAFAC class translation factor GTPase superfamily. Classic translation factor GTPase family. EF-G/EF-2 subfamily.

It is found in the cytoplasm. Functionally, catalyzes the GTP-dependent ribosomal translocation step during translation elongation. During this step, the ribosome changes from the pre-translocational (PRE) to the post-translocational (POST) state as the newly formed A-site-bound peptidyl-tRNA and P-site-bound deacylated tRNA move to the P and E sites, respectively. Catalyzes the coordinated movement of the two tRNA molecules, the mRNA and conformational changes in the ribosome. The chain is Elongation factor G from Ehrlichia chaffeensis (strain ATCC CRL-10679 / Arkansas).